The primary structure comprises 383 residues: Homoserine O-acetyltransferase (383 aa).

Residues 52–362 (NAILVCHALT…PWGHDAFLLD (311 aa)) form the AB hydrolase-1 domain. Ser-158 (nucleophile) is an active-site residue. Arg-227 lines the substrate pocket. Catalysis depends on residues Asp-323 and His-356. A substrate-binding site is contributed by Asp-357.

Belongs to the AB hydrolase superfamily. MetX family. As to quaternary structure, homodimer.

Its subcellular location is the cytoplasm. The enzyme catalyses L-homoserine + acetyl-CoA = O-acetyl-L-homoserine + CoA. It participates in amino-acid biosynthesis; L-methionine biosynthesis via de novo pathway; O-acetyl-L-homoserine from L-homoserine: step 1/1. Its function is as follows. Transfers an acetyl group from acetyl-CoA to L-homoserine, forming acetyl-L-homoserine. This chain is Homoserine O-acetyltransferase, found in Symbiobacterium thermophilum (strain DSM 24528 / JCM 14929 / IAM 14863 / T).